We begin with the raw amino-acid sequence, 294 residues long: Putative HTH-type transcriptional regulatory protein STK_12680 (294 aa).

Positions 123-175 constitute an HTH cro/C1-type domain; it reads LKKKREEMGLSLGEVAQALGVSRISIYDYEREDSYVSIDIAEKLVELFGDDIL. The H-T-H motif DNA-binding region spans 134–153; the sequence is LGEVAQALGVSRISIYDYER.

The protein is Putative HTH-type transcriptional regulatory protein STK_12680 of Sulfurisphaera tokodaii (strain DSM 16993 / JCM 10545 / NBRC 100140 / 7) (Sulfolobus tokodaii).